Consider the following 74-residue polypeptide: Antitoxin VapB39 (74 aa).

Its function is as follows. Antitoxin component of a type II toxin-antitoxin (TA) system. This Mycobacterium tuberculosis (strain CDC 1551 / Oshkosh) protein is Antitoxin VapB39 (vapB39).